The sequence spans 167 residues: uncharacterized protein (167 aa).

One can recognise an N-acetyltransferase domain in the interval 9–167 (PVMRRLTLQD…DCEVRMLREL (159 aa)).

The protein belongs to the acetyltransferase family.

This is an uncharacterized protein from Escherichia coli (strain K12).